The chain runs to 264 residues: tRNA (guanine-N(1)-)-methyltransferase (264 aa).

S-adenosyl-L-methionine is bound by residues glycine 125 and 145–150; that span reads LGDFVL.

It belongs to the RNA methyltransferase TrmD family. As to quaternary structure, homodimer.

Its subcellular location is the cytoplasm. It catalyses the reaction guanosine(37) in tRNA + S-adenosyl-L-methionine = N(1)-methylguanosine(37) in tRNA + S-adenosyl-L-homocysteine + H(+). In terms of biological role, specifically methylates guanosine-37 in various tRNAs. This Burkholderia vietnamiensis (strain G4 / LMG 22486) (Burkholderia cepacia (strain R1808)) protein is tRNA (guanine-N(1)-)-methyltransferase.